Consider the following 477-residue polypeptide: Ribulose bisphosphate carboxylase large chain (477 aa).

A propeptide spanning residues 1-2 (MS) is cleaved from the precursor. At Pro3 the chain carries N-acetylproline. Residue Lys14 is modified to N6,N6,N6-trimethyllysine. Asn123 and Thr173 together coordinate substrate. The active-site Proton acceptor is the Lys175. Position 177 (Lys177) interacts with substrate. Residues Lys201, Asp203, and Glu204 each coordinate Mg(2+). An N6-carboxylysine modification is found at Lys201. The active-site Proton acceptor is His294. Arg295, His327, and Ser379 together coordinate substrate.

It belongs to the RuBisCO large chain family. Type I subfamily. In terms of assembly, heterohexadecamer of 8 large chains and 8 small chains; disulfide-linked. The disulfide link is formed within the large subunit homodimers. Mg(2+) serves as cofactor. The disulfide bond which can form in the large chain dimeric partners within the hexadecamer appears to be associated with oxidative stress and protein turnover.

It is found in the plastid. The protein localises to the chloroplast. It carries out the reaction 2 (2R)-3-phosphoglycerate + 2 H(+) = D-ribulose 1,5-bisphosphate + CO2 + H2O. The catalysed reaction is D-ribulose 1,5-bisphosphate + O2 = 2-phosphoglycolate + (2R)-3-phosphoglycerate + 2 H(+). In terms of biological role, ruBisCO catalyzes two reactions: the carboxylation of D-ribulose 1,5-bisphosphate, the primary event in carbon dioxide fixation, as well as the oxidative fragmentation of the pentose substrate in the photorespiration process. Both reactions occur simultaneously and in competition at the same active site. This is Ribulose bisphosphate carboxylase large chain from Cichorium intybus (Chicory).